Reading from the N-terminus, the 439-residue chain is Probable RNA-binding protein 23 (439 aa).

Positions 13 to 159 (MLEAPYKKEE…PVREPVDNLS (147 aa)) are disordered. The segment covering 17–34 (PYKKEEDEQQRKEVKKDY) has biased composition (basic and acidic residues). The segment covering 36-57 (SNTTSSTSNSGNETSGSSTIGE) has biased composition (low complexity). The segment covering 60–90 (KKKRSRSHNKSRDRKRSRSRDRDRYRRRNSR) has biased composition (basic residues). The span at 103–125 (RSWDRRHGSESRSRDHRREDRVH) shows a compositional bias: basic and acidic residues. Residues Ser128 and Ser149 each carry the phosphoserine modification. The span at 144 to 159 (HFREKSPVREPVDNLS) shows a compositional bias: basic and acidic residues. 2 consecutive RRM domains span residues 166 to 243 (RTVF…ASQA) and 263 to 341 (MRLY…HVTE).

This sequence belongs to the splicing factor SR family. Aryl sulfonamide anticancer drugs, such as indisulam (E7070) or E7820, promote ubiquitination and subsequent degradation by the DCX(DCAF15) complex. Aryl sulfonamide anticancer drugs change the substrate specificity of DCAF15 by acting as a molecular glue that promotes binding between DCAF15 and weak affinity interactor RBM23. As to expression, highly expressed in placenta, liver, skeletal muscle, heart and kidney. Expressed at lower levels in the colon, thymus, spleen, small intestine and lung.

It is found in the nucleus. RNA-binding protein that acts both as a transcription coactivator and pre-mRNA splicing factor. Regulates steroid hormone receptor-mediated transcription, independently of the pre-mRNA splicing factor activity. The protein is Probable RNA-binding protein 23 of Homo sapiens (Human).